A 149-amino-acid polypeptide reads, in one-letter code: Large ribosomal subunit protein bL9 (149 aa).

This sequence belongs to the bacterial ribosomal protein bL9 family.

Its function is as follows. Binds to the 23S rRNA. The chain is Large ribosomal subunit protein bL9 from Teredinibacter turnerae (strain ATCC 39867 / T7901).